Reading from the N-terminus, the 120-residue chain is Adult-specific rigid cuticular protein 11.9 (120 aa).

One can recognise a Chitin-binding type R&amp;R domain in the interval 9–87; the sequence is GGAYNFGYNT…ALAAMAPKAP (79 aa).

Its function is as follows. Component of the rigid cuticle of the spider. The polypeptide is Adult-specific rigid cuticular protein 11.9 (Araneus diadematus (European garden spider)).